A 116-amino-acid chain; its full sequence is Large ribosomal subunit protein bL17 (116 aa).

Belongs to the bacterial ribosomal protein bL17 family. Part of the 50S ribosomal subunit. Contacts protein L32.

The protein is Large ribosomal subunit protein bL17 of Acaryochloris marina (strain MBIC 11017).